Reading from the N-terminus, the 457-residue chain is Argininosuccinate lyase (457 aa).

It belongs to the lyase 1 family. Argininosuccinate lyase subfamily.

It localises to the cytoplasm. The enzyme catalyses 2-(N(omega)-L-arginino)succinate = fumarate + L-arginine. Its pathway is amino-acid biosynthesis; L-arginine biosynthesis; L-arginine from L-ornithine and carbamoyl phosphate: step 3/3. This Yersinia pseudotuberculosis serotype IB (strain PB1/+) protein is Argininosuccinate lyase.